Reading from the N-terminus, the 1584-residue chain is Sterile alpha motif domain-containing protein 9-like (1584 aa).

The region spanning 14-79 is the SAM domain; sequence WTKEHVKKWV…RSYNKLNSKS (66 aa). Residues 76–122 form a disordered region; the sequence is NSKSPESDNHDPGQLDNSKPSKTEHQKNPKHTKKEEENSMSSNIDYD. Over residues 80–112 the composition is skewed to basic and acidic residues; that stretch reads PESDNHDPGQLDNSKPSKTEHQKNPKHTKKEEE.

Interacts with EEA1. As to expression, widely expressed in adult and fetal tissues. Expressed in the cerebellum. Variable expression in tumors. Down-regulated in breast cancer.

The protein localises to the early endosome. It is found in the mitochondrion. Functionally, may be involved in endosome fusion. Mediates down-regulation of growth factor signaling via internalization of growth factor receptors. This chain is Sterile alpha motif domain-containing protein 9-like (SAMD9L), found in Homo sapiens (Human).